A 165-amino-acid chain; its full sequence is Protein NKG7 (165 aa).

The next 4 membrane-spanning stretches (helical) occupy residues 9 to 29 (LLGG…DFWF), 61 to 81 (FSIM…LSCF), 92 to 112 (LVST…MAVY), and 133 to 153 (FYLG…SLGA).

The protein belongs to the PMP-22/EMP/MP20 family. Expressed in activated T-cells, in kidney, liver, lung and pancreas. Not expressed in brain, heart, or skeletal muscle. Expressed at high levels in TCR gamma delta-expressing CTL clones, and in some TCR alpha beta-expressing CTL clones (both CD4+ and CD8+), but is not expressed in other TCR alpha beta-expressing CTL clones and in cell lines representing B-cells, monocytes, and myeloid cells.

The protein resides in the cell membrane. It localises to the cytolytic granule membrane. Functionally, regulates cytotoxic granule exocytosis in effector lymphocytes, thus acting as a critical mediator of inflammation in a broad range of infectious and non-infectious diseases. Essential for cytotoxic degranulation of natural killer (NK) cells and CD8(+) T-cells and for the activation of CD4(+) T-cells following infection. Plays a critical role in CD8(+) T-cell and NK cell-mediated cytolysis of target cells and contributes to the cytolytic activity via the perforin/granzyme pathway by enhancing exocytosis of LAMP1-carrying lytic granules. Contributes to NK cell-mediated control of cancer metastasis. This Homo sapiens (Human) protein is Protein NKG7 (NKG7).